Reading from the N-terminus, the 266-residue chain is Hydroxyethylthiazole kinase (266 aa).

Substrate is bound at residue methionine 44. Residues lysine 120 and threonine 166 each coordinate ATP. Substrate is bound at residue glycine 193.

It belongs to the Thz kinase family. Mg(2+) serves as cofactor.

The catalysed reaction is 5-(2-hydroxyethyl)-4-methylthiazole + ATP = 4-methyl-5-(2-phosphooxyethyl)-thiazole + ADP + H(+). It functions in the pathway cofactor biosynthesis; thiamine diphosphate biosynthesis; 4-methyl-5-(2-phosphoethyl)-thiazole from 5-(2-hydroxyethyl)-4-methylthiazole: step 1/1. Catalyzes the phosphorylation of the hydroxyl group of 4-methyl-5-beta-hydroxyethylthiazole (THZ). The sequence is that of Hydroxyethylthiazole kinase from Syntrophomonas wolfei subsp. wolfei (strain DSM 2245B / Goettingen).